The sequence spans 1196 residues: Phosphoglucan, water dikinase, chloroplastic (1196 aa).

Residues 1–54 (MESIGSHCCSSPFTFITRNSSSSLPRLVNITHRVNLSHQSHRLRNSNSRLTCTA) constitute a chloroplast transit peptide. N-acetylthreonine is present on T55. Residues 66–166 (KKDGSGTKVR…NFSVVCHWDA (101 aa)) enclose the CBM20 domain. The interval 174-200 (PQEVGNDDDVGDGGHERDNHDVGDDRV) is disordered. Positions 185–200 (DGGHERDNHDVGDDRV) are enriched in basic and acidic residues. The active-site Tele-phosphohistidine intermediate is H759. A disordered region spans residues 804–855 (LSTEGRSRTSKSSATKKTDKNSLSKKKTDKKSLSIDDEESKPGSSSSNSLLY).

It belongs to the PEP-utilizing enzyme family. As to quaternary structure, homodimer. It depends on Mg(2+) as a cofactor. As to expression, in all starch containing tissues (e.g. roots, leaves, stems, inflorescence and siliques).

It is found in the plastid. The protein resides in the chloroplast. It catalyses the reaction [(1-&gt;4)-6-phospho-alpha-D-glucosyl](n) + n ATP + n H2O = [(1-&gt;4)-3,6-bisphospho-alpha-D-glucosyl](n) + n AMP + n phosphate + 2n H(+). Mediates the incorporation of phosphate into starch-like phospho-alpha-glucan, mostly at the C-3 position of glucose units. Required for starch degradation, suggesting that the phosphate content of starch regulates its degradability. This Arabidopsis thaliana (Mouse-ear cress) protein is Phosphoglucan, water dikinase, chloroplastic (GWD3).